Here is a 566-residue protein sequence, read N- to C-terminus: Membrane protein insertase YidC (566 aa).

Helical transmembrane passes span 3-23 (IKRIILYVIVALLAIALFNAW), 346-366 (GWLWPISMLLFWILSSVHAVV), 369-389 (WGWSIIITTILIKIVFYWFSA), 436-456 (GGCLPMLIQVPVFIAFYYVII), and 509-529 (MWILPVIFTVFFINFPAGLVL).

Belongs to the OXA1/ALB3/YidC family. Type 1 subfamily. Interacts with the Sec translocase complex via SecD. Specifically interacts with transmembrane segments of nascent integral membrane proteins during membrane integration.

The protein localises to the cell inner membrane. Required for the insertion and/or proper folding and/or complex formation of integral membrane proteins into the membrane. Involved in integration of membrane proteins that insert both dependently and independently of the Sec translocase complex, as well as at least some lipoproteins. Aids folding of multispanning membrane proteins. The sequence is that of Membrane protein insertase YidC from Coxiella burnetii (strain Dugway 5J108-111).